A 360-amino-acid polypeptide reads, in one-letter code: Histidinol-phosphate aminotransferase (360 aa).

At Lys211 the chain carries N6-(pyridoxal phosphate)lysine.

It belongs to the class-II pyridoxal-phosphate-dependent aminotransferase family. Histidinol-phosphate aminotransferase subfamily. In terms of assembly, homodimer. Requires pyridoxal 5'-phosphate as cofactor.

The enzyme catalyses L-histidinol phosphate + 2-oxoglutarate = 3-(imidazol-4-yl)-2-oxopropyl phosphate + L-glutamate. It functions in the pathway amino-acid biosynthesis; L-histidine biosynthesis; L-histidine from 5-phospho-alpha-D-ribose 1-diphosphate: step 7/9. This Sodalis glossinidius (strain morsitans) protein is Histidinol-phosphate aminotransferase.